The following is a 548-amino-acid chain: Glucose-6-phosphate isomerase (548 aa).

The active-site Proton donor is glutamate 353. Catalysis depends on residues histidine 384 and lysine 512.

Belongs to the GPI family.

The protein resides in the cytoplasm. The catalysed reaction is alpha-D-glucose 6-phosphate = beta-D-fructose 6-phosphate. The protein operates within carbohydrate biosynthesis; gluconeogenesis. It functions in the pathway carbohydrate degradation; glycolysis; D-glyceraldehyde 3-phosphate and glycerone phosphate from D-glucose: step 2/4. Functionally, catalyzes the reversible isomerization of glucose-6-phosphate to fructose-6-phosphate. This is Glucose-6-phosphate isomerase from Pseudoalteromonas translucida (strain TAC 125).